The chain runs to 101 residues: Synaptobrevin-B (101 aa).

Residues 1–76 (MSNNPNNSGQ…RRQMWCRNMK (76 aa)) are Cytoplasmic-facing. The 61-residue stretch at 13–73 (KTQSILQEVD…VTIRRQMWCR (61 aa)) folds into the v-SNARE coiled-coil homology domain. Residues 77–97 (LQLIIIAVVILVLAVILIPII) traverse the membrane as a helical; Anchor for type IV membrane protein segment. Topologically, residues 98–101 (MKFV) are vesicular.

It belongs to the synaptobrevin family.

It localises to the cytoplasmic vesicle. Its subcellular location is the secretory vesicle membrane. In terms of biological role, involved in the targeting and/or fusion of transport vesicles to their target membrane. This chain is Synaptobrevin-B (sybB), found in Dictyostelium discoideum (Social amoeba).